Reading from the N-terminus, the 177-residue chain is B-phycoerythrin beta chain (177 aa).

Positions 50 and 61 each coordinate phycourobilin. N72 bears the N4-methylasparagine mark. Positions 82 and 158 each coordinate (2R,3E)-phycoerythrobilin.

Belongs to the phycobiliprotein family. Heteromer of 6 alpha, 6 beta and one gamma chain. Contains two covalently linked phycoerythrobilin chromophores and one covalently linked phycourobilin chromophore.

The protein resides in the plastid. The protein localises to the chloroplast thylakoid membrane. In terms of biological role, light-harvesting photosynthetic bile pigment-protein from the phycobiliprotein complex. This Porphyridium sordidum (Red alga) protein is B-phycoerythrin beta chain (cpeB).